The sequence spans 166 residues: Regulatory protein RecX (166 aa).

Belongs to the RecX family.

The protein localises to the cytoplasm. Functionally, modulates RecA activity. The polypeptide is Regulatory protein RecX (Escherichia coli O139:H28 (strain E24377A / ETEC)).